Consider the following 317-residue polypeptide: Pantothenate kinase (317 aa).

Position 95–102 (95–102) interacts with ATP; sequence GSVAVGKS.

Belongs to the prokaryotic pantothenate kinase family.

The protein localises to the cytoplasm. It catalyses the reaction (R)-pantothenate + ATP = (R)-4'-phosphopantothenate + ADP + H(+). It functions in the pathway cofactor biosynthesis; coenzyme A biosynthesis; CoA from (R)-pantothenate: step 1/5. The chain is Pantothenate kinase from Rhodopseudomonas palustris (strain BisB18).